A 149-amino-acid polypeptide reads, in one-letter code: UPF0208 membrane protein PBPRA2797 (149 aa).

2 helical membrane passes run 41–60 (FATR…QMAF) and 65–87 (ALPQ…LWWL).

The protein belongs to the UPF0208 family.

Its subcellular location is the cell inner membrane. In Photobacterium profundum (strain SS9), this protein is UPF0208 membrane protein PBPRA2797.